Reading from the N-terminus, the 191-residue chain is Protein YceI (191 aa).

Positions 1-22 (MKKNLLGFTLASLLFTTGSAVA) are cleaved as a signal peptide.

The protein belongs to the UPF0312 family. Type 1 subfamily.

It localises to the periplasm. This is Protein YceI from Salmonella newport (strain SL254).